The following is a 136-amino-acid chain: Putative pre-16S rRNA nuclease (136 aa).

Belongs to the YqgF nuclease family.

It localises to the cytoplasm. Could be a nuclease involved in processing of the 5'-end of pre-16S rRNA. The chain is Putative pre-16S rRNA nuclease from Francisella tularensis subsp. tularensis (strain WY96-3418).